The following is a 56-amino-acid chain: Small ribosomal subunit protein uS14 (56 aa).

Zn(2+) contacts are provided by Cys-21, Cys-24, Cys-39, and Cys-42.

Belongs to the universal ribosomal protein uS14 family. As to quaternary structure, component of the 40S small ribosomal subunit. The cofactor is Zn(2+).

It is found in the cytoplasm. It localises to the cytosol. The protein localises to the rough endoplasmic reticulum. This Culex quinquefasciatus (Southern house mosquito) protein is Small ribosomal subunit protein uS14 (RpS29).